Here is a 95-residue protein sequence, read N- to C-terminus: Co-chaperonin GroES (95 aa).

This sequence belongs to the GroES chaperonin family. As to quaternary structure, heptamer of 7 subunits arranged in a ring. Interacts with the chaperonin GroEL.

It is found in the cytoplasm. Its function is as follows. Together with the chaperonin GroEL, plays an essential role in assisting protein folding. The GroEL-GroES system forms a nano-cage that allows encapsulation of the non-native substrate proteins and provides a physical environment optimized to promote and accelerate protein folding. GroES binds to the apical surface of the GroEL ring, thereby capping the opening of the GroEL channel. This Chlorobium luteolum (strain DSM 273 / BCRC 81028 / 2530) (Pelodictyon luteolum) protein is Co-chaperonin GroES.